Reading from the N-terminus, the 209-residue chain is Superoxide dismutase [Mn/Fe] (209 aa).

The Fe(3+) site is built by His-38, His-90, Asp-172, and His-176. Residues His-38, His-90, Asp-172, and His-176 each coordinate Mn(2+).

Belongs to the iron/manganese superoxide dismutase family. Mn(2+) serves as cofactor. It depends on Fe(3+) as a cofactor.

It catalyses the reaction 2 superoxide + 2 H(+) = H2O2 + O2. Functionally, destroys superoxide anion radicals which are normally produced within the cells and which are toxic to biological systems. Catalyzes the dismutation of superoxide anion radicals into O2 and H2O2 by successive reduction and oxidation of the transition metal ion at the active site. The sequence is that of Superoxide dismutase [Mn/Fe] (sodB) from Rickettsia prowazekii (strain Madrid E).